The chain runs to 135 residues: Glutaredoxin-C3 (135 aa).

One can recognise a Glutaredoxin domain in the interval 26 to 134 (VARVERLASE…PLLKEAGALW (109 aa)). The cysteines at positions 46 and 49 are disulfide-linked. Residues 132–135 (ALWL) carry the Responsive for interaction with TGA factors motif.

It belongs to the glutaredoxin family. CC-type subfamily.

The protein resides in the cytoplasm. The protein localises to the nucleus. Functionally, has a glutathione-disulfide oxidoreductase activity in the presence of NADPH and glutathione reductase. Reduces low molecular weight disulfides and proteins. The polypeptide is Glutaredoxin-C3 (GRXC3) (Oryza sativa subsp. japonica (Rice)).